Consider the following 331-residue polypeptide: Tetraacyldisaccharide 4'-kinase (331 aa).

59–66 (FVGGTGKT) is an ATP binding site.

Belongs to the LpxK family.

The catalysed reaction is a lipid A disaccharide + ATP = a lipid IVA + ADP + H(+). It participates in glycolipid biosynthesis; lipid IV(A) biosynthesis; lipid IV(A) from (3R)-3-hydroxytetradecanoyl-[acyl-carrier-protein] and UDP-N-acetyl-alpha-D-glucosamine: step 6/6. Functionally, transfers the gamma-phosphate of ATP to the 4'-position of a tetraacyldisaccharide 1-phosphate intermediate (termed DS-1-P) to form tetraacyldisaccharide 1,4'-bis-phosphate (lipid IVA). The chain is Tetraacyldisaccharide 4'-kinase from Alkalilimnicola ehrlichii (strain ATCC BAA-1101 / DSM 17681 / MLHE-1).